We begin with the raw amino-acid sequence, 174 residues long: Putative serine protease 46 (174 aa).

One can recognise a Peptidase S1 domain in the interval 43 to 174 (VVKGKLVEVG…IGWGTTGKKG (132 aa)). An intrachain disulfide couples cysteine 68 to cysteine 84. Residues histidine 83 and aspartate 128 each act as charge relay system in the active site.

Belongs to the peptidase S1 family.

The protein is Putative serine protease 46 of Homo sapiens (Human).